A 1045-amino-acid chain; its full sequence is Elongation factor 3 (1045 aa).

Ile-42, His-44, and Ser-83 together coordinate ADP. HEAT repeat units lie at residues Pro-86–Pro-123, Ala-125–Ser-162, Leu-166–Asn-203, Leu-171–Phe-209, Asp-205–Pro-241, Ala-242–Asp-279, and Pro-285–Val-323. ADP-binding residues include Thr-392 and His-396. 2 ABC transporter domains span residues Glu-426–Leu-641 and Val-667–Asp-993. The ADP site is built by Asn-703, Glu-922, Asn-925, and His-951. The segment at Gly-975–Phe-1045 is disordered. Residues Arg-1020–Lys-1031 are compositionally biased toward basic residues.

This sequence belongs to the ABC transporter superfamily. ABCF family. EF3 subfamily.

The protein resides in the cytoplasm. Its subcellular location is the cytosol. The catalysed reaction is ATP + H2O = ADP + phosphate + H(+). The protein operates within protein biosynthesis; polypeptide chain elongation. Ribosome-dependent ATPase that functions in cytoplasmic translation elongation. Required for the ATP-dependent release of deacylated tRNA from the ribosomal E-site during protein biosynthesis. Stimulates the eEF1A-dependent binding of aminoacyl-tRNA to the ribosomal A-site, which has reduced affinity for tRNA as long as the E-site is occupied. Assists translation termination by stimulating the release of nascent protein from the ribosome by release factors. The chain is Elongation factor 3 from Zygosaccharomyces rouxii (strain ATCC 2623 / CBS 732 / NBRC 1130 / NCYC 568 / NRRL Y-229).